Consider the following 395-residue polypeptide: 1-deoxy-D-xylulose 5-phosphate reductoisomerase (395 aa).

The NADPH site is built by T10, G11, S12, I13, N38, and N123. K124 lines the 1-deoxy-D-xylulose 5-phosphate pocket. E125 serves as a coordination point for NADPH. D149 serves as a coordination point for Mn(2+). Positions 150, 151, 185, and 208 each coordinate 1-deoxy-D-xylulose 5-phosphate. E151 contacts Mn(2+). NADPH is bound at residue G214. 1-deoxy-D-xylulose 5-phosphate-binding residues include S221, N226, K227, and E230. E230 contributes to the Mn(2+) binding site.

Belongs to the DXR family. It depends on Mg(2+) as a cofactor. Mn(2+) is required as a cofactor.

The catalysed reaction is 2-C-methyl-D-erythritol 4-phosphate + NADP(+) = 1-deoxy-D-xylulose 5-phosphate + NADPH + H(+). It participates in isoprenoid biosynthesis; isopentenyl diphosphate biosynthesis via DXP pathway; isopentenyl diphosphate from 1-deoxy-D-xylulose 5-phosphate: step 1/6. In terms of biological role, catalyzes the NADPH-dependent rearrangement and reduction of 1-deoxy-D-xylulose-5-phosphate (DXP) to 2-C-methyl-D-erythritol 4-phosphate (MEP). This chain is 1-deoxy-D-xylulose 5-phosphate reductoisomerase, found in Shewanella woodyi (strain ATCC 51908 / MS32).